A 118-amino-acid chain; its full sequence is uncharacterized protein (118 aa).

A signal peptide spans 1–26 (MTKLKMLSMLTVMIASLFIFSSQALA). The region spanning 30–104 (FTVSTSSGAP…VNIGYVSDTY (75 aa)) is the SH3b domain.

The protein to B.subtilis YraI.

This is an uncharacterized protein from Bacillus subtilis (strain 168).